Consider the following 296-residue polypeptide: 4-hydroxy-tetrahydrodipicolinate synthase (296 aa).

Residue T49 participates in pyruvate binding. Residue Y137 is the Proton donor/acceptor of the active site. The Schiff-base intermediate with substrate role is filled by K166. Residue I208 participates in pyruvate binding.

It belongs to the DapA family. As to quaternary structure, homotetramer; dimer of dimers.

It localises to the cytoplasm. The enzyme catalyses L-aspartate 4-semialdehyde + pyruvate = (2S,4S)-4-hydroxy-2,3,4,5-tetrahydrodipicolinate + H2O + H(+). Its pathway is amino-acid biosynthesis; L-lysine biosynthesis via DAP pathway; (S)-tetrahydrodipicolinate from L-aspartate: step 3/4. In terms of biological role, catalyzes the condensation of (S)-aspartate-beta-semialdehyde [(S)-ASA] and pyruvate to 4-hydroxy-tetrahydrodipicolinate (HTPA). The protein is 4-hydroxy-tetrahydrodipicolinate synthase of Chlorobaculum parvum (strain DSM 263 / NCIMB 8327) (Chlorobium vibrioforme subsp. thiosulfatophilum).